The primary structure comprises 281 residues: Phosphate import ATP-binding protein PstB 1 (281 aa).

A disordered region spans residues 1–34 (MTENTAETADESSDGGVTATTGAATTTPTTPPEP). A compositionally biased stretch (low complexity) spans 15-28 (GGVTATTGAATTTP). Residues 36–276 (IRARDLDVFY…PEHQRVEEYI (241 aa)) form the ABC transporter domain. 68–75 (GPSGCGKS) serves as a coordination point for ATP.

It belongs to the ABC transporter superfamily. Phosphate importer (TC 3.A.1.7) family. In terms of assembly, the complex is composed of two ATP-binding proteins (PstB), two transmembrane proteins (PstC and PstA) and a solute-binding protein (PstS).

The protein resides in the cell membrane. It carries out the reaction phosphate(out) + ATP + H2O = ADP + 2 phosphate(in) + H(+). Functionally, part of the ABC transporter complex PstSACB involved in phosphate import. Responsible for energy coupling to the transport system. The sequence is that of Phosphate import ATP-binding protein PstB 1 from Halobacterium salinarum (strain ATCC 700922 / JCM 11081 / NRC-1) (Halobacterium halobium).